The sequence spans 44 residues: Protein PsbN (44 aa).

The helical transmembrane segment at 6–26 (FFFTFFLWFLLLSVTGYSVYV) threads the bilayer.

It belongs to the PsbN family.

Its subcellular location is the plastid. It is found in the chloroplast thylakoid membrane. In terms of biological role, may play a role in photosystem I and II biogenesis. This Chlamydomonas reinhardtii (Chlamydomonas smithii) protein is Protein PsbN.